The sequence spans 519 residues: Mannuronan C5-epimerase (519 aa).

The first 25 residues, 1 to 25, serve as a signal peptide directing secretion; the sequence is MNLHPHLRHSLLASALLLASGLATA. PbH1 repeat units lie at residues 219-246, 281-303, 305-328, 330-352, 354-376, and 377-399; these read GTET…SISQ, TQDF…DPHD, SHRL…IVSR, VNDS…VIDR, SVNN…TLYE, and SGDN…RVRN. H302 (proton acceptor) is an active-site residue.

Belongs to the D-mannuronate C5-epimerase family.

It localises to the periplasm. The catalysed reaction is [(1-&gt;4)-beta-D-mannuronosyl](n) = [alginate](n). It functions in the pathway glycan biosynthesis; alginate biosynthesis. Catalyzes the epimerization of beta-D-mannuronate to alpha-L-guluronate during the synthesis of the linear polysaccharide alginate. In addition, is part of a periplasmic protein complex that protects alginate from degradation by AlgL by channeling the newly formed alginate polymer through a scaffold that transfers the alginate polymer through the periplasmic space to the outer membrane secretin AlgE. The polypeptide is Mannuronan C5-epimerase (algG) (Pseudomonas putida (strain ATCC 47054 / DSM 6125 / CFBP 8728 / NCIMB 11950 / KT2440)).